Consider the following 251-residue polypeptide: 5'-nucleotidase SurE (251 aa).

A divalent metal cation-binding residues include Asp8, Asp9, Ser39, and Asn90.

Belongs to the SurE nucleotidase family. Requires a divalent metal cation as cofactor.

The protein resides in the cytoplasm. The catalysed reaction is a ribonucleoside 5'-phosphate + H2O = a ribonucleoside + phosphate. In terms of biological role, nucleotidase that shows phosphatase activity on nucleoside 5'-monophosphates. The polypeptide is 5'-nucleotidase SurE (Legionella pneumophila subsp. pneumophila (strain Philadelphia 1 / ATCC 33152 / DSM 7513)).